A 1192-amino-acid chain; its full sequence is DNA topoisomerase 2 (1192 aa).

ATP is bound by residues asparagine 64, asparagine 95, and 142 to 149; that span reads GTNGVGLK. Residues glutamate 438, aspartate 539, and aspartate 541 each contribute to the Mg(2+) site. One can recognise a Topo IIA-type catalytic domain in the interval 707-1174; the sequence is IPNFLDGMTR…PGASVWLEEI (468 aa). Tyrosine 800 functions as the O-(5'-phospho-DNA)-tyrosine intermediate in the catalytic mechanism.

Belongs to the type II topoisomerase family. It depends on Mg(2+) as a cofactor. Requires Mn(2+) as cofactor. Ca(2+) serves as cofactor.

Its subcellular location is the host cytoplasm. The catalysed reaction is ATP-dependent breakage, passage and rejoining of double-stranded DNA.. Type II topoisomerase. Processively relaxes supercoiled DNA. Displays DNA-supercoiling activity only when associated with the viral histone-like protein. This African swine fever virus (isolate Tick/South Africa/Pretoriuskop Pr4/1996) (ASFV) protein is DNA topoisomerase 2.